Consider the following 529-residue polypeptide: Low affinity inorganic phosphate transporter 5 (529 aa).

Topologically, residues 1-21 (MASNNLNVLNALDTAHTQWYH) are cytoplasmic. A helical transmembrane segment spans residues 22-42 (VTAVVIAGMGFFTDAYDLFCI). At 43-71 (STISKLLGRLYYYDPHTHAPGKLPHTVNN) the chain is on the extracellular side. A helical membrane pass occupies residues 72-92 (WVTGVALVGTLTGQLVFGWLG). Residues 93-99 (DKLGRKK) are Cytoplasmic-facing. The chain crosses the membrane as a helical span at residues 100-120 (VYGLTLILMVICALSSGLSFG). The Extracellular portion of the chain corresponds to 121–124 (YSRK). The chain crosses the membrane as a helical span at residues 125–145 (VVIGTLCFFRFWLGFGIGGDY). Over 146-163 (PLSATIMSEYANKRTRGA) the chain is Cytoplasmic. The helical transmembrane segment at 164–184 (FIAAVFAMQGVGIIFAGLVLM) threads the bilayer. Over 185-211 (TVSKVFLMRYAGKAFSTDEVFSTEPEA) the chain is Extracellular. Residues 212 to 232 (DYVWRIVLMLGALPALLTYYW) traverse the membrane as a helical segment. At 233–291 (RMKMPETGRYTAIIEGNAKQAAIDMGKVLEIEIQAEGEKLAKFKSANDYSLLSNEFFQR) the chain is on the cytoplasmic side. A helical transmembrane segment spans residues 292–312 (HGLHLIGTMSTWFLLDIAFYS). The Extracellular portion of the chain corresponds to 313–344 (QNLTQKDIFPTMGLVSDAKSISALREMFETSR). N-linked (GlcNAc...) asparagine glycosylation is present at N314. The helical transmembrane segment at 345-365 (AMFVIALLGTFPGYWFTVFFI) threads the bilayer. The Cytoplasmic segment spans residues 366 to 374 (EKIGRFKIQ). A helical membrane pass occupies residues 375-395 (LMGFFMMSIFMAIIGVRYDYL). Topologically, residues 396–405 (KTKDHKWTFA) are extracellular. Residues 406 to 426 (ALYGLTFFFANSGPNSTTFVL) traverse the membrane as a helical segment. Residues 427–472 (PAELFPTRVRSTCHALSAASGKAGAMVSAFGVQQYTQDGEVHKIKK) lie on the Cytoplasmic side of the membrane. The helical transmembrane segment at 473-493 (AMLFLAFTNMVGFCCTFLVTE) threads the bilayer. Residues 494 to 529 (TKGRSLEEISGEDENQNETKMKGRPVSGGHQDDGWD) lie on the Extracellular side of the membrane. The tract at residues 500-529 (EEISGEDENQNETKMKGRPVSGGHQDDGWD) is disordered. N510 carries N-linked (GlcNAc...) asparagine glycosylation.

The protein belongs to the major facilitator superfamily. Phosphate:H(+) symporter (TC 2.A.1.9) family. In terms of tissue distribution, expressed at low levels in non-mycorrhized roots.

The protein resides in the cell membrane. It carries out the reaction phosphate(in) + H(+)(in) = phosphate(out) + H(+)(out). Functionally, low-affinity transporter for external inorganic phosphate (Pi) probably involved in the acquisition of phosphate released by arbuscular mycorrhizal (AM) fungi during AM symbiosis. The polypeptide is Low affinity inorganic phosphate transporter 5 (Petunia hybrida (Petunia)).